Here is a 382-residue protein sequence, read N- to C-terminus: O-antigen polymerase (382 aa).

Residues 1-3 (MNN) are Cytoplasmic-facing. Residues 4 to 22 (INKIFITFLCIELIIGGGG) form a helical membrane-spanning segment. The Periplasmic segment spans residues 23 to 34 (RLLEPLGIFPLR). The chain crosses the membrane as a helical span at residues 35–54 (YLLFVFSFILLIFNLVTFNF). Over 55–62 (SITQKCVS) the chain is Cytoplasmic. A helical transmembrane segment spans residues 63 to 81 (LFIWLLLFPFYGFFVGLLA). The Periplasmic portion of the chain corresponds to 82-94 (GNKINDILFDVQP). Residues 95–112 (YLFMLSLIYLFTLRYTLK) form a helical membrane-spanning segment. At 113–125 (VFSCEIFIKIVNA) the chain is on the cytoplasmic side. The helical transmembrane segment at 126 to 146 (FALYGSLLYISYIILLNFGLL) threads the bilayer. At 147–167 (NFNLIYEHLSLTSEFFFRPDG) the chain is on the periplasmic side. The helical transmembrane segment at 168 to 187 (AFFSKSFYFFGVGAIISFVD) threads the bilayer. The Cytoplasmic portion of the chain corresponds to 188–189 (KK). A helical transmembrane segment spans residues 190–206 (YLKCLIIVLAILLTESR). Residues 207 to 208 (GV) lie on the Periplasmic side of the membrane. Residues 209–226 (LLFTTLSLLLASFKLHKL) form a helical membrane-spanning segment. The Cytoplasmic portion of the chain corresponds to 227-229 (YLN). A helical transmembrane segment spans residues 230–247 (TIIIILGSVLFIIMLYMV). At 248–300 (GSRSEDSDSVRFNDLYFYYKNVDLATFLFGRGFGSFILDRLRIEIVPLEILQK) the chain is on the periplasmic side. A helical transmembrane segment spans residues 301–318 (TGVIGVFISLVPMLLIFL). Over 319–329 (KGYFLNSTKTS) the chain is Cytoplasmic. Residues 330-349 (LMMSLILFFSITVSITNPFL) form a helical membrane-spanning segment. Over 350–352 (FTP) the chain is Periplasmic. Residues 353 to 370 (MGIFIIGVVVLWVFSIEN) traverse the membrane as a helical segment. The Cytoplasmic portion of the chain corresponds to 371–382 (IQISNNLTSGAK).

It localises to the cell inner membrane. It catalyses the reaction n lipid-linked O-antigen repeat units = a lipid-linked O antigen + (n-1) polyisoprenyl diphosphate.. It participates in bacterial outer membrane biogenesis; LPS O-antigen biosynthesis. Its function is as follows. Polymerase involved in the biosynthesis of the lipopolysaccharide (LPS). Catalyzes the polymerization of the O-antigen repeat units on the periplasmic face of the inner membrane, leading to the formation of the lipid-linked O-antigen molecule. This Shigella flexneri protein is O-antigen polymerase.